Consider the following 311-residue polypeptide: Nucleotide-binding protein Acel_1111 (311 aa).

ATP is bound at residue 30–37 (GLSGAGRS). GTP is bound at residue 81–84 (DVRS).

The protein belongs to the RapZ-like family.

Functionally, displays ATPase and GTPase activities. This is Nucleotide-binding protein Acel_1111 from Acidothermus cellulolyticus (strain ATCC 43068 / DSM 8971 / 11B).